The primary structure comprises 76 residues: cAMP-dependent protein kinase inhibitor alpha (76 aa).

T2 carries the N-acetylthreonine modification. Positions 49-76 (KTEGEDDGQRSSTEQSGEAQGEAAKSES) are disordered.

The protein belongs to the PKI family. As to expression, present at high levels in skeletal muscle and brain but is present at lower levels in heart, testis and liver.

In terms of biological role, extremely potent competitive inhibitor of cAMP-dependent protein kinase activity, this protein interacts with the catalytic subunit of the enzyme after the cAMP-induced dissociation of its regulatory chains. The chain is cAMP-dependent protein kinase inhibitor alpha (Pkia) from Mus musculus (Mouse).